A 333-amino-acid polypeptide reads, in one-letter code: Probable HTH-type transcriptional repressor ExuR (333 aa).

The HTH lacI-type domain maps to 2 to 56 (VTIKDIAKLANVSHTTVSRALNNSPYIKEHTKKKILELAEQLNYTPNVNAKSLAM). The segment at residues 4 to 23 (IKDIAKLANVSHTTVSRALN) is a DNA-binding region (H-T-H motif).

Functionally, transcriptional repressor for the exu locus which is required for galacturonate utilization. The protein is Probable HTH-type transcriptional repressor ExuR (exuR) of Bacillus subtilis (strain 168).